Consider the following 1804-residue polypeptide: Collagen alpha-1(XI) chain (1804 aa).

A signal peptide spans 1 to 34 (MEPWSRWKTKRWIWDLTISTLALTFLFQAREVRG). A propeptide spans 35-511 (AAPVDILKAL…SKGPTISAQE (477 aa)) (N-terminal propeptide). 2 cysteine pairs are disulfide-bonded: Cys60–Cys242 and Cys181–Cys235. The 173-residue stretch at 70–242 (DVAYRVTEEA…DYCDHYSPDC (173 aa)) folds into the Laminin G-like domain. A nonhelical region region spans residues 229-417 (KAAYDYCDHY…DFTETSINGH (189 aa)). Positions 315–329 (YQTETPRRVSGSNEP) are enriched in polar residues. Disordered regions lie at residues 315 to 334 (YQTE…PVEE) and 433 to 506 (EPGM…KGPT). The segment at 418–506 (GAYGEKGQKG…YGGDGSKGPT (89 aa)) is triple-helical region (interrupted). In terms of domain architecture, Collagen-like 1 spans 440–488 (GPPGPAGPAGLMGPPGLQGPSGLPGDPGDRGPPGRPGLPGADGLPGPPG). Composition is skewed to low complexity over residues 447-465 (PAGL…LPGD) and 477-494 (LPGA…LMLP). The tract at residues 507–509 (ISA) is short nonhelical segment. Positions 510-527 (QEAQAQAILQQARIALRG) are telopeptide. Positions 526 to 1567 (RGPPGPMGLT…SIQGDAGDNI (1042 aa)) are disordered. Collagen-like domains are found at residues 527–584 (GPPG…GADG) and 567–623 (PPGP…GPPG). The segment at 528-1540 (PPGPMGLTGR…PGPPGPPGEV (1013 aa)) is triple-helical region. Gly residues-rich tracts occupy residues 539–548 (GPVGGPGSAG) and 581–590 (GADGGRGMPG). Lys610 is modified (allysine). A compositionally biased stretch (low complexity) spans 639–655 (PRGLPGEAGPRGLLGPR). The span at 697-708 (QGLPGPQGPIGP) shows a compositional bias: pro residues. Over residues 715 to 726 (QGKPGLAGLPGA) the composition is skewed to low complexity. In terms of domain architecture, Collagen-like 4 spans 728-781 (GPPGHPGKEGQSGEKGALGPPGPQGPIGYPGPRGVKGADGVRGLKGSKGEKGED). Residues 805–814 (RGEDGPEGPK) are compositionally biased toward basic and acidic residues. 3 stretches are compositionally biased toward low complexity: residues 873 to 901 (KPGP…PGPK), 916 to 925 (RGPQGPQGPV), and 969 to 979 (PQGPTGETGPI). Positions 1040-1049 (GLKGGEGPQG) are enriched in gly residues. A compositionally biased stretch (pro residues) spans 1074–1083 (RPGPQGPPGP). The span at 1084-1108 (AGEKGAPGEKGPQGPAGRDGVQGPV) shows a compositional bias: low complexity. Residues 1160–1169 (GIAGGDGEPG) show a composition bias toward gly residues. The span at 1216–1227 (MGPPGPPGPRGP) shows a compositional bias: pro residues. Low complexity-rich tracts occupy residues 1240–1249 (PGSIGSVGVV) and 1282–1296 (AGPP…IKGP). Over residues 1341-1360 (QPGPPGPSGEAGPPGPPGKR) the composition is skewed to pro residues. Low complexity-rich tracts occupy residues 1383–1392 (AEGPPGKTGP) and 1417–1426 (QGLPGAAGQD). 2 Collagen-like domains span residues 1427-1482 (GPPG…SPGA) and 1481-1539 (GAKG…PPGE). The segment covering 1428 to 1437 (PPGPLGPPGL) has biased composition (pro residues). An Allysine modification is found at Lys1450. Over residues 1453–1462 (PGLIGLIGPP) the composition is skewed to low complexity. A compositionally biased stretch (gly residues) spans 1481-1490 (GAKGDGGIPG). Residues 1491–1507 (PAGPIGPPGPPGLPGPA) are compositionally biased toward pro residues. Positions 1509–1519 (PKGNKGSSGPT) are enriched in low complexity. Over residues 1528–1537 (PGPPGPPGPP) the composition is skewed to pro residues. The segment at 1541-1561 (IQPLPILSPKKTRRHTESIQG) is nonhelical region (C-terminal). A propeptide spans 1562-1804 (DAGDNILDYS…FEVGPACFLG (243 aa)) (C-terminal propeptide). The Fibrillar collagen NC1 domain maps to 1575–1803 (EEIFGSLNSL…GFEVGPACFL (229 aa)). Cys1605 and Cys1637 form a disulfide bridge. Positions 1623, 1625, 1626, 1628, and 1631 each coordinate Ca(2+). Asn1638 carries an N-linked (GlcNAc...) asparagine glycan. 2 disulfide bridges follow: Cys1646–Cys1801 and Cys1712–Cys1755.

Belongs to the fibrillar collagen family. Trimers composed of three different chains: alpha 1(XI), alpha 2(XI), and alpha 3(XI). Alpha 3(XI) is a post-translational modification of alpha 1(II). Alpha 1(V) can also be found instead of alpha 3(XI)=1(II). In terms of processing, prolines at the third position of the tripeptide repeating unit (G-X-Y) are hydroxylated in some or all of the chains. N-glycosylated.

Its subcellular location is the secreted. It localises to the extracellular space. The protein resides in the extracellular matrix. May play an important role in fibrillogenesis by controlling lateral growth of collagen II fibrils. The sequence is that of Collagen alpha-1(XI) chain (Col11a1) from Mus musculus (Mouse).